A 487-amino-acid chain; its full sequence is Malonate-semialdehyde dehydrogenase (487 aa).

NAD(+) is bound by residues Ala-150, Phe-152, Lys-176, Glu-179, Arg-180, Ser-229, and Thr-251. The Nucleophile role is filled by Cys-284. Glu-382 provides a ligand contact to NAD(+).

Belongs to the aldehyde dehydrogenase family. IolA subfamily. In terms of assembly, homotetramer.

The catalysed reaction is 3-oxopropanoate + NAD(+) + CoA + H2O = hydrogencarbonate + acetyl-CoA + NADH + H(+). It carries out the reaction 2-methyl-3-oxopropanoate + NAD(+) + CoA + H2O = propanoyl-CoA + hydrogencarbonate + NADH + H(+). Its pathway is polyol metabolism; myo-inositol degradation into acetyl-CoA; acetyl-CoA from myo-inositol: step 7/7. In terms of biological role, catalyzes the oxidation of malonate semialdehyde (MSA) and methylmalonate semialdehyde (MMSA) into acetyl-CoA and propanoyl-CoA, respectively. Is involved in a myo-inositol catabolic pathway. Bicarbonate, and not CO2, is the end-product of the enzymatic reaction. The protein is Malonate-semialdehyde dehydrogenase of Bacillus velezensis (strain DSM 23117 / BGSC 10A6 / LMG 26770 / FZB42) (Bacillus amyloliquefaciens subsp. plantarum).